A 170-amino-acid polypeptide reads, in one-letter code: Tubulin polymerization-promoting protein family member 2 (170 aa).

Residues threonine 127 to lysine 170 form a disordered region. Residues threonine 129–methionine 149 show a composition bias toward basic and acidic residues.

Belongs to the TPPP family. As to expression, expressed in spermatids. Detected in liver cancer (at protein level).

Its subcellular location is the cytoplasm. It is found in the cytosol. The protein resides in the cell projection. It localises to the cilium. The protein localises to the flagellum. In terms of biological role, probable regulator of microtubule dynamics required for sperm motility. In contrast to other members of the family, has no microtubule bundling activity. In Homo sapiens (Human), this protein is Tubulin polymerization-promoting protein family member 2.